Here is a 757-residue protein sequence, read N- to C-terminus: Protein Lines homolog 1 (757 aa).

At serine 635 the chain carries Phosphoserine.

This sequence belongs to the protein lines family. In terms of tissue distribution, expressed in adult testis, prostate, prostate, spleen, thymus, skeletal muscle, fetal kidney and brain.

The protein is Protein Lines homolog 1 of Homo sapiens (Human).